A 141-amino-acid chain; its full sequence is MAKKVVAIIKLAIAAGKANPAPPIGPALGQHGVNIMMFCKEYNAKTSDQAGLVVPVEISVYEDRSFTFILKTPPASVLIKKAAGIEKGSGEPNAVQVGQITKAQLQEIAQTKMPDLNANDIEAAMNIVAGTARNMGVAVVD.

Belongs to the universal ribosomal protein uL11 family. Part of the ribosomal stalk of the 50S ribosomal subunit. Interacts with L10 and the large rRNA to form the base of the stalk. L10 forms an elongated spine to which L12 dimers bind in a sequential fashion forming a multimeric L10(L12)X complex. One or more lysine residues are methylated.

Its function is as follows. Forms part of the ribosomal stalk which helps the ribosome interact with GTP-bound translation factors. This chain is Large ribosomal subunit protein uL11, found in Acaryochloris marina (strain MBIC 11017).